The sequence spans 187 residues: Apolipophorin-3 (187 aa).

An N-terminal signal peptide occupies residues 1–17; it reads MAAKFIILLALFALSQA. A propeptide spanning residues 18-22 is cleaved from the precursor; that stretch reads SVVRR.

The protein belongs to the insect apolipophorin-3 family. As to quaternary structure, equilibrium between a soluble monomer and a bound lipoprotein form. Apolipophorin-3 associates with lipophorin during lipid loading until each particle contains 9 or 14 molecules of apolipophorin-3. As to expression, hemolymph.

The protein resides in the secreted. Its function is as follows. Assists in the loading of diacylglycerol, generated from triacylglycerol stores in the fat body through the action of adipokinetic hormone, into lipophorin, the hemolymph lipoprotein. It increases the lipid carrying capacity of lipophorin by covering the expanding hydrophobic surface resulting from diacylglycerol uptake. It thus plays a critical role in the transport of lipids during flight in several species of insects. The sequence is that of Apolipophorin-3 from Hyphantria cunea (Fall webworm moth).